The following is a 111-amino-acid chain: uncharacterized protein (111 aa).

This is an uncharacterized protein from Caenorhabditis elegans.